A 66-amino-acid polypeptide reads, in one-letter code: Cold shock-like protein (66 aa).

Positions 3–62 constitute a CSD domain; sequence GKVKWFDSKKGYGFITKDEGGDVFVHWSAIEMEGFKTLKEGQVVEFEIQEGKKGPQAAHV.

Monomer.

It localises to the cytoplasm. The sequence is that of Cold shock-like protein (csp) from Thermotoga maritima (strain ATCC 43589 / DSM 3109 / JCM 10099 / NBRC 100826 / MSB8).